A 341-amino-acid chain; its full sequence is BZIP domain-containing transcription factor BZP4 (341 aa).

Composition is skewed to polar residues over residues M1 to E32, L61 to L76, P128 to H139, and Y150 to S163. 2 disordered regions span residues M1–M95 and T118–Q254. Positions S178 to P192 are enriched in low complexity. 2 stretches are compositionally biased toward basic and acidic residues: residues T225–S234 and E242–Q254. The basic motif stretch occupies residues K250–K269. The bZIP domain occupies K250–K308. Residues I279–L307 are leucine-zipper.

This sequence belongs to the bZIP family.

The protein localises to the nucleus. Its subcellular location is the cytoplasm. In terms of biological role, transcription factor that promotes the production of melanin, a pigment that serves as antioxidant, reactive oxygen species (ROS) scavenger and that protect fungal pathogens from radiation and host immune responses. In Cryptococcus neoformans var. grubii serotype A (strain H99 / ATCC 208821 / CBS 10515 / FGSC 9487) (Filobasidiella neoformans var. grubii), this protein is BZIP domain-containing transcription factor BZP4.